The chain runs to 517 residues: Gamma-1-syntrophin (517 aa).

The PDZ domain occupies 57-140 (TVTIRRQTVG…EVTLTVSFLK (84 aa)). The PH domain occupies 283–390 (QIVYMGWCEA…WERAFQTATF (108 aa)).

This sequence belongs to the syntrophin family. In terms of assembly, isoform 1, but not isoform 2, interacts with the dystrophin protein DMD and related proteins DTNA and DTNB. Interacts with DGKZ. As to expression, brain specific. In CNS, it is expressed in the perikaryon and proximal portion of the neuronal processes. Strong expression in the hippocampus, neuron-rich dendate granule cells, and pyramidal cell layers. Highly expressed in neurons of the cerebral cortex. Also expressed in the cerebellar cortex, deep cerebellar nuclei, thalamus, and basal ganglia. No expression in muscle cells.

It localises to the cytoplasm. It is found in the cytoskeleton. The protein localises to the nucleus. Functionally, adapter protein that binds to and probably organizes the subcellular localization of a variety of proteins. May link various receptors to the actin cytoskeleton and the dystrophin glycoprotein complex. May participate in regulating the subcellular location of diacylglycerol kinase-zeta to ensure that diacylglycerol is rapidly inactivated following receptor activation. This chain is Gamma-1-syntrophin (SNTG1), found in Homo sapiens (Human).